We begin with the raw amino-acid sequence, 501 residues long: WD repeat-containing protein wdr-5.3 (501 aa).

Disordered regions lie at residues 1 to 35, 58 to 85, and 155 to 197; these read MNPE…LESN, PIGV…YQSH, and KSAE…ITKK. Positions 22-35 are enriched in polar residues; the sequence is PNQQSLQSRMLESN. The span at 167-177 shows a compositional bias: polar residues; the sequence is SITTKPTSTIQ. WD repeat units lie at residues 211 to 241, 253 to 283, 295 to 325, 337 to 367, 381 to 410, 422 to 455, and 467 to 499; these read GHTK…KVWN, SHQL…KIFD, GHTN…RVWD, AHSD…RVWD, DHAP…KLWD, GHKN…LVWS, and GHTT…RIWR.

It belongs to the WD repeat WDR5/wds family.

Not required for methylation of histone H3 'Lys-4'. The chain is WD repeat-containing protein wdr-5.3 (wdr-5.3) from Caenorhabditis elegans.